The primary structure comprises 201 residues: Large ribosomal subunit protein eL15B (201 aa).

A disordered region spans residues 161 to 182; the sequence is SRGLTSIGKKSRGIGKGHRYNN. The span at 169–179 shows a compositional bias: basic residues; the sequence is KKSRGIGKGHR. Serine 183 is modified (phosphoserine).

It belongs to the eukaryotic ribosomal protein eL15 family. Component of the large ribosomal subunit (LSU). Mature yeast ribosomes consist of a small (40S) and a large (60S) subunit. The 40S small subunit contains 1 molecule of ribosomal RNA (18S rRNA) and at least 33 different proteins. The large 60S subunit contains 3 rRNA molecules (25S, 5.8S and 5S rRNA) and at least 46 different proteins.

It is found in the cytoplasm. The protein localises to the nucleus. Its subcellular location is the nucleolus. Its function is as follows. Component of the ribosome, a large ribonucleoprotein complex responsible for the synthesis of proteins in the cell. The small ribosomal subunit (SSU) binds messenger RNAs (mRNAs) and translates the encoded message by selecting cognate aminoacyl-transfer RNA (tRNA) molecules. The large subunit (LSU) contains the ribosomal catalytic site termed the peptidyl transferase center (PTC), which catalyzes the formation of peptide bonds, thereby polymerizing the amino acids delivered by tRNAs into a polypeptide chain. The nascent polypeptides leave the ribosome through a tunnel in the LSU and interact with protein factors that function in enzymatic processing, targeting, and the membrane insertion of nascent chains at the exit of the ribosomal tunnel. The polypeptide is Large ribosomal subunit protein eL15B (rpl1502) (Schizosaccharomyces pombe (strain 972 / ATCC 24843) (Fission yeast)).